The chain runs to 210 residues: Prolactin (210 aa).

The first 23 residues, 1 to 23 (MARRSQGTKLHLAVLCLVVSCHA), serve as a signal peptide directing secretion. 2 disulfide bridges follow: C69–C183 and C200–C210.

It belongs to the somatotropin/prolactin family.

It is found in the secreted. This Oncorhynchus mykiss (Rainbow trout) protein is Prolactin (prl).